A 218-amino-acid chain; its full sequence is Thiamine-phosphate synthase (218 aa).

4-amino-2-methyl-5-(diphosphooxymethyl)pyrimidine-binding positions include 43-47 and asparagine 78; that span reads QFRDK. Residues aspartate 79 and aspartate 98 each contribute to the Mg(2+) site. Residue serine 117 coordinates 4-amino-2-methyl-5-(diphosphooxymethyl)pyrimidine. 143–145 contacts 2-[(2R,5Z)-2-carboxy-4-methylthiazol-5(2H)-ylidene]ethyl phosphate; that stretch reads TNS. Lysine 146 is a 4-amino-2-methyl-5-(diphosphooxymethyl)pyrimidine binding site. 2-[(2R,5Z)-2-carboxy-4-methylthiazol-5(2H)-ylidene]ethyl phosphate is bound by residues glycine 174 and 194–195; that span reads IS.

The protein belongs to the thiamine-phosphate synthase family. It depends on Mg(2+) as a cofactor.

The catalysed reaction is 2-[(2R,5Z)-2-carboxy-4-methylthiazol-5(2H)-ylidene]ethyl phosphate + 4-amino-2-methyl-5-(diphosphooxymethyl)pyrimidine + 2 H(+) = thiamine phosphate + CO2 + diphosphate. The enzyme catalyses 2-(2-carboxy-4-methylthiazol-5-yl)ethyl phosphate + 4-amino-2-methyl-5-(diphosphooxymethyl)pyrimidine + 2 H(+) = thiamine phosphate + CO2 + diphosphate. It catalyses the reaction 4-methyl-5-(2-phosphooxyethyl)-thiazole + 4-amino-2-methyl-5-(diphosphooxymethyl)pyrimidine + H(+) = thiamine phosphate + diphosphate. It participates in cofactor biosynthesis; thiamine diphosphate biosynthesis; thiamine phosphate from 4-amino-2-methyl-5-diphosphomethylpyrimidine and 4-methyl-5-(2-phosphoethyl)-thiazole: step 1/1. Its function is as follows. Condenses 4-methyl-5-(beta-hydroxyethyl)thiazole monophosphate (THZ-P) and 2-methyl-4-amino-5-hydroxymethyl pyrimidine pyrophosphate (HMP-PP) to form thiamine monophosphate (TMP). The polypeptide is Thiamine-phosphate synthase (Lactococcus lactis subsp. cremoris (strain SK11)).